The chain runs to 76 residues: Alpha/kappa-conotoxin-like fe14.1 (76 aa).

Residues 1–24 (MPSVRSVTCCCLLWMMLSVQLVTP) form the signal peptide. Positions 25-39 (GSPGTAQLSGHRTAR) are excised as a propeptide. Intrachain disulfides connect Cys46–Cys61 and Cys50–Cys63. An Arginine amide modification is found at Arg64. The propeptide occupies 65–76 (GKRDVVSSSMAV).

This sequence belongs to the conotoxin J superfamily. As to expression, expressed by the venom duct.

The protein resides in the secreted. Highly inhibits both nicotinic acetylcholine receptors (neuronal (alpha-3/beta-4) and muscular (alpha-1/beta-1/epsilon/delta) subtypes) and the voltage-gated potassium channel Kv1.6/KCNA6 subtype. The polypeptide is Alpha/kappa-conotoxin-like fe14.1 (Conus ferrugineus (Cone snail)).